Here is a 164-residue protein sequence, read N- to C-terminus: Large ribosomal subunit protein uL10 (164 aa).

It belongs to the universal ribosomal protein uL10 family. As to quaternary structure, part of the ribosomal stalk of the 50S ribosomal subunit. The N-terminus interacts with L11 and the large rRNA to form the base of the stalk. The C-terminus forms an elongated spine to which L12 dimers bind in a sequential fashion forming a multimeric L10(L12)X complex.

Functionally, forms part of the ribosomal stalk, playing a central role in the interaction of the ribosome with GTP-bound translation factors. This chain is Large ribosomal subunit protein uL10, found in Helicobacter pylori (strain P12).